A 173-amino-acid polypeptide reads, in one-letter code: Large ribosomal subunit protein uL10 (173 aa).

The protein belongs to the universal ribosomal protein uL10 family. As to quaternary structure, part of the ribosomal stalk of the 50S ribosomal subunit. The N-terminus interacts with L11 and the large rRNA to form the base of the stalk. The C-terminus forms an elongated spine to which L12 dimers bind in a sequential fashion forming a multimeric L10(L12)X complex.

Forms part of the ribosomal stalk, playing a central role in the interaction of the ribosome with GTP-bound translation factors. This Myxococcus xanthus (strain DK1622) protein is Large ribosomal subunit protein uL10.